The following is a 1712-amino-acid chain: U3 small nucleolar RNA-associated protein 10 (1712 aa).

HEAT repeat units follow at residues 164–202 (EELV…GRGE), 490–528 (TCDF…ASGS), 564–605 (TLLS…PKHG), 987–1025 (TQTI…AFEH), 1236–1275 (VISL…RFGK), 1605–1646 (EEVT…DSAA), and 1667–1705 (LGLL…VLGE).

The protein belongs to the HEATR1/UTP10 family. Component of the ribosomal small subunit (SSU) processome.

It localises to the nucleus. It is found in the nucleolus. In terms of biological role, involved in nucleolar processing of pre-18S ribosomal RNA. Involved in ribosome biosynthesis. The sequence is that of U3 small nucleolar RNA-associated protein 10 from Phaeosphaeria nodorum (strain SN15 / ATCC MYA-4574 / FGSC 10173) (Glume blotch fungus).